The following is a 688-amino-acid chain: Polyribonucleotide nucleotidyltransferase (688 aa).

Residues Asp484 and Asp490 each contribute to the Mg(2+) site. One can recognise a KH domain in the interval 550-609 (PTTEIFNVAPDKIVEIIGQGGRVIREIVEKFEVKIDLNKPSGEVKIMGNKERVLKTKEFI). The region spanning 626–688 (DEVLEAQVKR…NKGKIALDLA (63 aa)) is the S1 motif domain.

The protein belongs to the polyribonucleotide nucleotidyltransferase family. It depends on Mg(2+) as a cofactor.

Its subcellular location is the cytoplasm. It catalyses the reaction RNA(n+1) + phosphate = RNA(n) + a ribonucleoside 5'-diphosphate. Its function is as follows. Involved in mRNA degradation. Catalyzes the phosphorolysis of single-stranded polyribonucleotides processively in the 3'- to 5'-direction. This chain is Polyribonucleotide nucleotidyltransferase, found in Helicobacter pylori (strain Shi470).